The following is a 207-amino-acid chain: Uracil phosphoribosyltransferase (207 aa).

5-phospho-alpha-D-ribose 1-diphosphate is bound by residues Arg-77, Arg-102, and 129 to 137 (DPMLATGGS). Residues Ile-192 and 197 to 199 (GDA) each bind uracil. Asp-198 provides a ligand contact to 5-phospho-alpha-D-ribose 1-diphosphate.

Belongs to the UPRTase family. Mg(2+) is required as a cofactor.

The enzyme catalyses UMP + diphosphate = 5-phospho-alpha-D-ribose 1-diphosphate + uracil. Its pathway is pyrimidine metabolism; UMP biosynthesis via salvage pathway; UMP from uracil: step 1/1. Allosterically activated by GTP. Functionally, catalyzes the conversion of uracil and 5-phospho-alpha-D-ribose 1-diphosphate (PRPP) to UMP and diphosphate. The polypeptide is Uracil phosphoribosyltransferase (Nocardia farcinica (strain IFM 10152)).